Here is a 144-residue protein sequence, read N- to C-terminus: Large ribosomal subunit protein uL15 (144 aa).

A disordered region spans residues 1–49 (MRLNTLSPAAGSKSAPKRVGRGIGSGLGKTAGRGHKGQKSRSGGGVRVG). Residues 21 to 31 (RGIGSGLGKTA) show a composition bias toward gly residues.

Belongs to the universal ribosomal protein uL15 family. As to quaternary structure, part of the 50S ribosomal subunit.

In terms of biological role, binds to the 23S rRNA. This is Large ribosomal subunit protein uL15 from Shewanella frigidimarina (strain NCIMB 400).